The following is a 216-amino-acid chain: MKKTLLGSLILLAFAGNVQAAANADTKGTVTFFGKVVENTCQVKTDHKNRSVVLNDVGKNSLKDKGNTAMPTPFTITLQNCNLTAANSSTNKANKVGLYFYSWENADKENNFTLKNKTSTSNDFATMVNIQLMESDGTKEIKVVGKETEDFVHKNATGAGVALTQTHPDNDHISGSTQLTGVTGDLPLHFIAQYYSLGSTTAGKVQSSVDFQIAYE.

The signal sequence occupies residues 1-20 (MKKTLLGSLILLAFAGNVQA). An intrachain disulfide couples C41 to C81.

The protein belongs to the fimbrial protein family.

The protein resides in the fimbrium. In terms of biological role, mediates adherence to oropharyngeal epithelial cells. Helps the airway colonization process. The sequence is that of Major fimbrial subunit (hifA) from Haemophilus influenzae.